A 131-amino-acid polypeptide reads, in one-letter code: MTTSSYFLLVALGLLLYLCQSSFGTEHTCEPGASPHPQGKCRPELAEFHETMCEVEESLQGGTDDARKKRGRASLLRKRRGFLSMLKARAKRNEASPLPRAGRGIVCECCKNSCTYEEITEYCPPVTEGSG.

Residues 1–24 (MTTSSYFLLVALGLLLYLCQSSFG) form the signal peptide. 4 disulfides stabilise this stretch: cysteine 29/cysteine 107, cysteine 41/cysteine 110, cysteine 53/cysteine 123, and cysteine 109/cysteine 114. Positions 59-92 (LQGGTDDARKKRGRASLLRKRRGFLSMLKARAKR) are cleaved as a propeptide — c peptide. Position 118 is a 4-carboxyglutamate; partial (glutamate 118). Residue serine 130 is modified to Serine amide.

The protein belongs to the insulin family. Heterodimer of A and B chains; disulfide-linked. In terms of tissue distribution, expressed by the venom gland.

It localises to the secreted. In terms of biological role, this venom insulin facilitates prey capture by rapidly inducing hypoglycemic shock. Intraperitoneal injection of this peptide into zebrafish lowers blood glucose with the same potency than human insulin. In vivo, when applied to water, this peptide reduces overall locomotor activity of zebrafish larvae, observed as a significant decrease in the percentage of time spent swimming and movement frequency. This Conus quercinus (Oak cone) protein is Con-Ins Q1.